Consider the following 87-residue polypeptide: MANHKSALKRHKQSLKRAARNRAVRTRIKNVIKDVRIALQQQDKEQAATALVQASAVLDKAASKGVVHWKTAARKISRLTKAVNQVA.

The interval Met-1–Arg-22 is disordered.

The protein belongs to the bacterial ribosomal protein bS20 family.

Its function is as follows. Binds directly to 16S ribosomal RNA. The chain is Small ribosomal subunit protein bS20 from Nitratidesulfovibrio vulgaris (strain DP4) (Desulfovibrio vulgaris).